Consider the following 780-residue polypeptide: Acetyl-CoA decarbonylase/synthase complex subunit alpha (780 aa).

Residues Cys-73, Cys-76, Cys-77, Cys-79, Cys-84, and Cys-93 each contribute to the [4Fe-4S] cluster site. His-116 lines the CO pocket. [Ni-4Fe-4S] cluster is bound by residues His-250, Cys-278, and Cys-317. 4Fe-4S ferredoxin-type domains are found at residues 399–429 (IDEI…MDAV) and 440–469 (LEEM…VSMV). [4Fe-4S] cluster contacts are provided by Cys-409, Cys-412, Cys-415, Cys-419, Cys-449, Cys-452, Cys-455, and Cys-459. Residues Cys-517, Cys-546, and Cys-581 each coordinate [Ni-4Fe-4S] cluster.

It belongs to the Ni-containing carbon monoxide dehydrogenase family. Heterotetramer of two alpha and two epsilon subunits. The ACDS complex is made up of alpha, epsilon, beta, gamma and delta subunits with a probable stoichiometry of (alpha(2)epsilon(2))(4)-beta(8)-(gamma(1)delta(1))(8). Requires [4Fe-4S] cluster as cofactor. The cofactor is [Ni-4Fe-4S] cluster.

It carries out the reaction CO + 2 oxidized [2Fe-2S]-[ferredoxin] + H2O = 2 reduced [2Fe-2S]-[ferredoxin] + CO2 + 2 H(+). Part of the ACDS complex that catalyzes the reversible cleavage of acetyl-CoA, allowing autotrophic growth from CO(2). The alpha-epsilon subcomponent functions as a carbon monoxide dehydrogenase. The chain is Acetyl-CoA decarbonylase/synthase complex subunit alpha from Methanothermobacter thermautotrophicus (strain ATCC 29096 / DSM 1053 / JCM 10044 / NBRC 100330 / Delta H) (Methanobacterium thermoautotrophicum).